Here is a 380-residue protein sequence, read N- to C-terminus: Glucose-1-phosphate adenylyltransferase (380 aa).

Residues G164, 179–180, and S190 contribute to the alpha-D-glucose 1-phosphate site; that span reads EK.

The protein belongs to the bacterial/plant glucose-1-phosphate adenylyltransferase family. As to quaternary structure, homotetramer.

It catalyses the reaction alpha-D-glucose 1-phosphate + ATP + H(+) = ADP-alpha-D-glucose + diphosphate. Its pathway is glycan biosynthesis; glycogen biosynthesis. In terms of biological role, involved in the biosynthesis of ADP-glucose, a building block required for the elongation reactions to produce glycogen. Catalyzes the reaction between ATP and alpha-D-glucose 1-phosphate (G1P) to produce pyrophosphate and ADP-Glc. The sequence is that of Glucose-1-phosphate adenylyltransferase from Lacticaseibacillus casei (strain BL23) (Lactobacillus casei).